The sequence spans 358 residues: Nuclear receptor subfamily 1 group I member 3 (358 aa).

The nuclear receptor DNA-binding region spans 18–93; that stretch reads PRNCVVCGDR…VGMRKDMILS (76 aa). The NR C4-type zinc-finger motif lies at 21-41; that stretch reads CVVCGDRATGYHFHALTCEGC. Thr-48 carries the post-translational modification Phosphothreonine; by PKC. The NR C4-type zinc finger occupies 57–81; it reads CPFAGRCEVSKAQRRHCPACRLQKC. The 240-residue stretch at 119–358 folds into the NR LBD domain; that stretch reads QQKELIQTLL…MMPLLGEICS (240 aa).

The protein belongs to the nuclear hormone receptor family. NR1 subfamily. In terms of assembly, heterodimer of NR1I3 and RXR. Interacts with PSMC4. Interacts with ECT2. Directly interacts with DNAJC7; this complex may also include HSP90. Interacts with CRY1. Interacts with CRY2 in a ligand-dependent manner. In terms of processing, phosphorylated at Thr-48 by PKC, dephosphorylation of Thr-48 is required for nuclear translocation and activation.

It is found in the nucleus. It localises to the cytoplasm. Its subcellular location is the cytoskeleton. In terms of biological role, binds and transactivates the retinoic acid response elements that control expression of the retinoic acid receptor beta 2 and alcohol dehydrogenase 3 genes. Transactivates both the phenobarbital responsive element module of the human CYP2B6 gene and the CYP3A4 xenobiotic response element. The sequence is that of Nuclear receptor subfamily 1 group I member 3 (Nr1i3) from Rattus norvegicus (Rat).